The primary structure comprises 2286 residues: Unconventional myosin-IXAb (2286 aa).

The region spanning 16-114 is the Ras-associating domain; that stretch reads SEFTLRVYPG…YRFLLREKNL (99 aa). The 824-residue stretch at 148-971 folds into the Myosin motor domain; the sequence is AQFVADLCSL…LRQRLQDELH (824 aa). Residues 178–198 form a helical membrane-spanning segment; that stretch reads IYTYVGSILIAVNPFKFLPIY. Residue 242–249 coordinates ATP; it reads GESGSGKT. The tract at residues 853–875 is actin-binding; the sequence is LNKLMETLGQSEPYFVKCIRSNA. IQ domains are found at residues 976–996, 1025–1054, 1066–1095, and 1089–1118; these read RRIV…HFCR, QQGA…AVLI, RNTA…AAVT, and QRRA…QQCR. Positions 976 to 1113 are neck or regulatory domain; that stretch reads RRIVCLQRSF…QSRQRCRILR (138 aa). Residues 1114 to 2254 form a tail region; that stretch reads EQQCREQSKH…PRANRSCPPK (1141 aa). 4 disordered regions span residues 1118-1279, 1308-1341, 1455-1588, and 1732-1754; these read REQS…QIRE, DVPL…FSVS, CEED…EPML, and DGTI…SDTV. The segment covering 1123-1133 has biased composition (polar residues); sequence HPSTVTKSLHQ. The span at 1134-1149 shows a compositional bias: basic and acidic residues; that stretch reads NTEEAEKLEEVWEKQT. The segment covering 1263–1273 has biased composition (polar residues); it reads PINSAPQTPNR. A compositionally biased stretch (acidic residues) spans 1455-1465; the sequence is CEEDEDDEYED. A compositionally biased stretch (basic and acidic residues) spans 1485–1501; the sequence is CVFHSDSEMSSQKEQKR. The segment covering 1529 to 1542 has biased composition (basic residues); it reads RGKMRFWSKSKHGD. Composition is skewed to basic and acidic residues over residues 1550-1562 and 1572-1585; these read RSAD…RRND and GVSE…ENRE. A Phorbol-ester/DAG-type zinc finger spans residues 1759 to 1808; sequence GHIFKSTQYSIPTYCEFCSSLIWMMDKACVCKLCRYACHKKCCLRMTTKC. The region spanning 1823 to 2011 is the Rho-GAP domain; the sequence is VELSRLTSDE…LIICEQMRKY (189 aa). Positions 2032 to 2049 are enriched in basic residues; that stretch reads LTHIRRSMGKSRARKSGH. Disordered stretches follow at residues 2032 to 2087 and 2113 to 2286; these read LTHI…QQEE and PRAS…EFMV. Positions 2080–2107 form a coiled coil; sequence QAAMQQEEKVLTQQIENLQKEKEELTYE. Composition is skewed to low complexity over residues 2176-2192 and 2200-2211; these read SLDS…SVSS and SSSSGPLFSSSS. The segment covering 2226–2238 has biased composition (polar residues); it reads EQASLSARCASSS. Over residues 2254 to 2270 the composition is skewed to basic and acidic residues; sequence KPREPGDTGGRRREHEF.

Belongs to the TRAFAC class myosin-kinesin ATPase superfamily. Myosin family.

Its subcellular location is the membrane. It is found in the cytoplasm. The protein localises to the synapse. It localises to the cell projection. The protein resides in the growth cone. Functionally, myosins are actin-based motor molecules with ATPase activity. Unconventional myosins serve in intracellular movements. Regulates Rho by stimulating it's GTPase activity in neurons. Required for the regulation of neurite branching and motor neuron axon guidance. The protein is Unconventional myosin-IXAb (myo9ab) of Danio rerio (Zebrafish).